The chain runs to 257 residues: Low affinity immunoglobulin gamma Fc region receptor III-A (257 aa).

A signal peptide spans Met1–Thr19. The Extracellular portion of the chain corresponds to His20–Gln209. 2 Ig-like C2-type domains span residues Pro25–Glu104 and Gly108–Thr190. Disulfide bonds link Cys48–Cys90 and Cys129–Cys173. 3 N-linked (GlcNAc...) asparagine glycosylation sites follow: Asn64, Asn134, and Asn162. An N-linked (GlcNAc...) asparagine; in variant N-181 glycan is attached at Asp181. A helical transmembrane segment spans residues Ile210–Val230. The Cytoplasmic portion of the chain corresponds to Arg231–Gly257.

In terms of assembly, forms a heterooligomeric complex with ITAM-containing signaling subunits FCER1G. Interacts (via transmembrane domain) with signaling subunits; this interaction is a prerequisite for receptor complex expression on the cell surface and intracellular signal transduction. Binds the Fc region of antigen-complexed IgG. In terms of tissue distribution, expressed in polymorphonuclear leukocytes, pulmonary alveolar macrophages and peripheral blood mononuclear cells (at protein level). Found in spleen, and at very low levels in lymph nodes but not in thymus or liver.

It is found in the cell membrane. In terms of biological role, receptor for the invariable Fc fragment of immunoglobulin gamma (IgG). Optimally activated upon binding of clustered antigen-IgG complexes displayed on cell surfaces, triggers lysis of antibody-coated cells, a process known as antibody-dependent cellular cytotoxicity (ADCC). Does not bind free monomeric IgG, thus avoiding inappropriate effector cell activation in the absence of antigenic trigger. Mediates IgG effector functions on natural killer (NK) cells. Binds antigen-IgG complexes generated upon infection and triggers NK cell-dependent cytokine production and degranulation to limit viral load and propagation. Fc-binding subunit that associates with FCER1G adapter to form functional signaling complexes. Following the engagement of antigen-IgG complexes, triggers phosphorylation of immunoreceptor tyrosine-based activation motif (ITAM)-containing adapter with subsequent activation of phosphatidylinositol 3-kinase signaling and sustained elevation of intracellular calcium that ultimately drive NK cell activation. Mediates enhanced ADCC in response to afucosylated IgGs. This is Low affinity immunoglobulin gamma Fc region receptor III-A from Sus scrofa (Pig).